The following is a 47-amino-acid chain: Protein YqgG (47 aa).

The protein is Protein YqgG of Escherichia coli (strain K12).